Here is a 100-residue protein sequence, read N- to C-terminus: Large ribosomal subunit protein uL23 (100 aa).

Belongs to the universal ribosomal protein uL23 family. As to quaternary structure, part of the 50S ribosomal subunit. Contacts protein L29, and trigger factor when it is bound to the ribosome.

Functionally, one of the early assembly proteins it binds 23S rRNA. One of the proteins that surrounds the polypeptide exit tunnel on the outside of the ribosome. Forms the main docking site for trigger factor binding to the ribosome. This chain is Large ribosomal subunit protein uL23, found in Mycobacterium ulcerans (strain Agy99).